The sequence spans 311 residues: Ribosomal RNA small subunit methyltransferase H (311 aa).

S-adenosyl-L-methionine-binding positions include 32–34 (AGH), aspartate 52, phenylalanine 79, aspartate 100, and glutamine 107.

This sequence belongs to the methyltransferase superfamily. RsmH family.

The protein localises to the cytoplasm. The enzyme catalyses cytidine(1402) in 16S rRNA + S-adenosyl-L-methionine = N(4)-methylcytidine(1402) in 16S rRNA + S-adenosyl-L-homocysteine + H(+). Functionally, specifically methylates the N4 position of cytidine in position 1402 (C1402) of 16S rRNA. The sequence is that of Ribosomal RNA small subunit methyltransferase H from Staphylococcus carnosus (strain TM300).